The sequence spans 367 residues: Ganglioside-induced differentiation-associated protein 1-like 1 (367 aa).

Residues 45–126 (ESLVLYHWTQ…YVERTFTGEH (82 aa)) form the GST N-terminal domain. Residues 174-341 (PKYATAEIRR…RLVKRKPPSF (168 aa)) form the GST C-terminal domain.

This sequence belongs to the GST superfamily.

The chain is Ganglioside-induced differentiation-associated protein 1-like 1 (GDAP1L1) from Homo sapiens (Human).